Consider the following 472-residue polypeptide: 3-isopropylmalate dehydratase large subunit (472 aa).

[4Fe-4S] cluster contacts are provided by Cys-347, Cys-407, and Cys-410.

The protein belongs to the aconitase/IPM isomerase family. LeuC type 1 subfamily. Heterodimer of LeuC and LeuD. It depends on [4Fe-4S] cluster as a cofactor.

It carries out the reaction (2R,3S)-3-isopropylmalate = (2S)-2-isopropylmalate. The protein operates within amino-acid biosynthesis; L-leucine biosynthesis; L-leucine from 3-methyl-2-oxobutanoate: step 2/4. In terms of biological role, catalyzes the isomerization between 2-isopropylmalate and 3-isopropylmalate, via the formation of 2-isopropylmaleate. The chain is 3-isopropylmalate dehydratase large subunit from Synechococcus sp. (strain WH7803).